We begin with the raw amino-acid sequence, 316 residues long: UPF0324 membrane protein SO_4708 (316 aa).

9 consecutive transmembrane segments (helical) span residues 61–80 (LLSY…AAIE), 85–107 (NLGL…TRAL), 114–136 (GHLI…APAV), 146–168 (ALAC…GHLL), 175–197 (FGVW…SAYG), 207–226 (IKLA…ALIF), 233–252 (LNLP…AHWL), 262–281 (LFMV…GAGI), and 293–315 (PLLL…ILYF).

This sequence belongs to the UPF0324 family.

It is found in the cell membrane. The chain is UPF0324 membrane protein SO_4708 from Shewanella oneidensis (strain ATCC 700550 / JCM 31522 / CIP 106686 / LMG 19005 / NCIMB 14063 / MR-1).